The chain runs to 365 residues: Chorismate synthase (365 aa).

Residues 41 to 61 are disordered; sequence IQKELDRRRPGQSEVSTPRHE. R48 lines the NADP(+) pocket. FMN is bound by residues 125 to 127, G285, 300 to 304, and R327; these read RSS and KPTPS.

The protein belongs to the chorismate synthase family. Requires FMNH2 as cofactor.

The enzyme catalyses 5-O-(1-carboxyvinyl)-3-phosphoshikimate = chorismate + phosphate. It participates in metabolic intermediate biosynthesis; chorismate biosynthesis; chorismate from D-erythrose 4-phosphate and phosphoenolpyruvate: step 7/7. Functionally, catalyzes the anti-1,4-elimination of the C-3 phosphate and the C-6 proR hydrogen from 5-enolpyruvylshikimate-3-phosphate (EPSP) to yield chorismate, which is the branch point compound that serves as the starting substrate for the three terminal pathways of aromatic amino acid biosynthesis. This reaction introduces a second double bond into the aromatic ring system. In Methanosarcina barkeri (strain Fusaro / DSM 804), this protein is Chorismate synthase.